A 123-amino-acid polypeptide reads, in one-letter code: Phosphoribosyl-AMP cyclohydrolase (123 aa).

Aspartate 81 lines the Mg(2+) pocket. Cysteine 82 provides a ligand contact to Zn(2+). Mg(2+) contacts are provided by aspartate 83 and aspartate 85. Zn(2+) is bound by residues cysteine 98 and cysteine 105.

It belongs to the PRA-CH family. Homodimer. Requires Mg(2+) as cofactor. Zn(2+) is required as a cofactor.

The protein localises to the cytoplasm. It catalyses the reaction 1-(5-phospho-beta-D-ribosyl)-5'-AMP + H2O = 1-(5-phospho-beta-D-ribosyl)-5-[(5-phospho-beta-D-ribosylamino)methylideneamino]imidazole-4-carboxamide. It participates in amino-acid biosynthesis; L-histidine biosynthesis; L-histidine from 5-phospho-alpha-D-ribose 1-diphosphate: step 3/9. Catalyzes the hydrolysis of the adenine ring of phosphoribosyl-AMP. This chain is Phosphoribosyl-AMP cyclohydrolase, found in Nocardioides sp. (strain ATCC BAA-499 / JS614).